A 401-amino-acid chain; its full sequence is 8-amino-7-oxononanoate synthase (401 aa).

R19 lines the substrate pocket. 106–107 (GY) lines the pyridoxal 5'-phosphate pocket. H131 serves as a coordination point for substrate. Pyridoxal 5'-phosphate contacts are provided by S176, H204, and T233. Position 236 is an N6-(pyridoxal phosphate)lysine (K236). T350 lines the substrate pocket.

The protein belongs to the class-II pyridoxal-phosphate-dependent aminotransferase family. BioF subfamily. In terms of assembly, homodimer. The cofactor is pyridoxal 5'-phosphate.

It carries out the reaction 6-carboxyhexanoyl-[ACP] + L-alanine + H(+) = (8S)-8-amino-7-oxononanoate + holo-[ACP] + CO2. Its pathway is cofactor biosynthesis; biotin biosynthesis. Catalyzes the decarboxylative condensation of pimeloyl-[acyl-carrier protein] and L-alanine to produce 8-amino-7-oxononanoate (AON), [acyl-carrier protein], and carbon dioxide. The chain is 8-amino-7-oxononanoate synthase from Pseudomonas aeruginosa (strain ATCC 15692 / DSM 22644 / CIP 104116 / JCM 14847 / LMG 12228 / 1C / PRS 101 / PAO1).